The chain runs to 364 residues: Rhomboid domain-containing protein 2 (364 aa).

A run of 5 helical transmembrane segments spans residues 11 to 31 (WCLCPEVPSATFFTALLSLLV), 63 to 83 (LVTYIFVYENPISLLCGAIII), 100 to 120 (CFFTVIFAIFSAIIFLSFEAV), 158 to 178 (FGMVVPSVLVPWLLLGASWLI), and 184 to 204 (LSNVCGLSIGLAYGLTYCYSI). Disordered regions lie at residues 242 to 282 (AQSR…KLAS) and 317 to 364 (SSVY…VPMP). Composition is skewed to polar residues over residues 267–276 (HPVSQTQHAS) and 317–329 (SSVYPASAGTSLG).

This sequence belongs to the peptidase S54 family.

It is found in the golgi apparatus. The protein localises to the cis-Golgi network membrane. This chain is Rhomboid domain-containing protein 2 (RHBDD2), found in Homo sapiens (Human).